Consider the following 532-residue polypeptide: Probable cytochrome c oxidase subunit 1 (532 aa).

Transmembrane regions (helical) follow at residues 33-53, 74-94, 95-115, 118-138, 163-183, 200-220, 252-272, and 284-304; these read IMYI…SLLF, VLIT…ALFG, GFGN…FPRL, ISFW…FVDG, MAIF…INLI, PLFV…MPVL, LFWF…FGIV, and IFGY…GFIV. Histidine 79 lines the Fe(II)-heme a pocket. Histidine 258 and tyrosine 262 together coordinate Cu cation. Histidine 307 and histidine 308 together coordinate Cu cation. 2 helical membrane-spanning segments follow: residues 318-338 and 355-375; these read ALIY…IKIF and MLFS…GIIL. Histidine 393 contributes to the heme a3 binding site. The next 3 helical transmembrane spans lie at 394–414, 431–451, and 473–493; these read FHYT…YYWF, FWIT…LGLA, and IGAG…FYTL. Residue histidine 395 participates in Fe(II)-heme a binding.

Belongs to the heme-copper respiratory oxidase family.

It localises to the cell membrane. The catalysed reaction is 4 Fe(II)-[cytochrome c] + O2 + 8 H(+)(in) = 4 Fe(III)-[cytochrome c] + 2 H2O + 4 H(+)(out). It participates in energy metabolism; oxidative phosphorylation. Cytochrome c oxidase is the component of the respiratory chain that catalyzes the reduction of oxygen to water. Subunits 1-3 form the functional core of the enzyme complex. CO I is the catalytic subunit of the enzyme. Electrons originating in cytochrome c are transferred via the copper A center of subunit 2 and heme A of subunit 1 to the bimetallic center formed by heme A3 and copper B. The polypeptide is Probable cytochrome c oxidase subunit 1 (ctaD) (Rickettsia felis (strain ATCC VR-1525 / URRWXCal2) (Rickettsia azadi)).